A 240-amino-acid polypeptide reads, in one-letter code: MTSLPCPLPDRGASNVVFPDLAPALSVVAAYPLGLSPGTAASPDLSYSQSYGHPRSYSHPGPATPGDSYLPRQQQLVAPSQPFHRPAEHPQELEAESEKLALSLVPSQQQSLTRKLRKPRTIYSSLQLQHLNQRFQHTQYLALPERAQLAAQLGLTQTQVKIWFQNKRSKYKKLLKQSSGEPEEDFSGRPPSLSPHSPALPFIWGLPKADTLPSSGYDNSHFGAWYQHRSPDVLALPQMM.

Disordered regions lie at residues 44–70 (DLSY…DSYL) and 175–194 (LKQS…PSLS). A DNA-binding region (homeobox) is located at residues 116 to 175 (LRKPRTIYSSLQLQHLNQRFQHTQYLALPERAQLAAQLGLTQTQVKIWFQNKRSKYKKLL).

Belongs to the distal-less homeobox family. As to expression, branchial arches, molar and incisor teeth and limbs.

It is found in the nucleus. In terms of biological role, may play a role in determining the production of hemoglobin S. May act as a repressor. During embryonic development, plays a role in palatogenesis. The protein is Homeobox protein DLX-4 (Dlx4) of Mus musculus (Mouse).